The primary structure comprises 431 residues: Enolase (431 aa).

Gln-168 contributes to the (2R)-2-phosphoglycerate binding site. Glu-210 serves as the catalytic Proton donor. 3 residues coordinate Mg(2+): Asp-247, Glu-291, and Asp-318. Residues Lys-343, Arg-372, Ser-373, and Lys-394 each contribute to the (2R)-2-phosphoglycerate site. Lys-343 (proton acceptor) is an active-site residue.

It belongs to the enolase family. Component of the RNA degradosome, a multiprotein complex involved in RNA processing and mRNA degradation. Mg(2+) is required as a cofactor.

The protein resides in the cytoplasm. The protein localises to the secreted. It is found in the cell surface. The enzyme catalyses (2R)-2-phosphoglycerate = phosphoenolpyruvate + H2O. The protein operates within carbohydrate degradation; glycolysis; pyruvate from D-glyceraldehyde 3-phosphate: step 4/5. Its function is as follows. Catalyzes the reversible conversion of 2-phosphoglycerate (2-PG) into phosphoenolpyruvate (PEP). It is essential for the degradation of carbohydrates via glycolysis. The protein is Enolase of Acinetobacter baumannii (strain AYE).